The chain runs to 683 residues: Methionine--tRNA ligase (683 aa).

A 'HIGH' region motif is present at residues 23 to 33; it reads PYANGSAHIGH. Zn(2+)-binding residues include Cys-154, Cys-157, Cys-166, and Cys-170. The 'KMSKS' region motif lies at 335 to 339; that stretch reads KFSKS. Lys-338 serves as a coordination point for ATP. One can recognise a tRNA-binding domain in the interval 583 to 683; that stretch reads DFAKMELRVG…KPSEPGTKVR (101 aa).

This sequence belongs to the class-I aminoacyl-tRNA synthetase family. MetG type 1 subfamily. In terms of assembly, homodimer. The cofactor is Zn(2+).

The protein localises to the cytoplasm. It catalyses the reaction tRNA(Met) + L-methionine + ATP = L-methionyl-tRNA(Met) + AMP + diphosphate. Its function is as follows. Is required not only for elongation of protein synthesis but also for the initiation of all mRNA translation through initiator tRNA(fMet) aminoacylation. This Methanocella arvoryzae (strain DSM 22066 / NBRC 105507 / MRE50) protein is Methionine--tRNA ligase.